A 704-amino-acid chain; its full sequence is Neutral ceramidase (704 aa).

A signal peptide spans 1-23; sequence MANSKMAFLAFLAVSFLCGLVSA. N230 is a glycosylation site (N-linked (GlcNAc...) asparagine). S276 serves as the catalytic Nucleophile. N-linked (GlcNAc...) asparagine glycosylation is found at N362, N550, and N598.

This sequence belongs to the neutral ceramidase family. Post-translationally, N-glycosylated. As to expression, widely expressed in different tissues but enriched in neurons at all stages of development.

The protein resides in the secreted. The enzyme catalyses an N-acylsphing-4-enine + H2O = sphing-4-enine + a fatty acid. Its function is as follows. Hydrolyzes the sphingolipid ceramide into sphingosine and free fatty acid at an optimal pH of 6.5-7.5. Acts as a key regulator of sphingolipid signaling metabolites by generating sphingosine at the cell surface. Regulates synaptic vesicle exocytosis and trafficking by controlling presynaptic terminal sphingolipid composition. The chain is Neutral ceramidase (CDase) from Drosophila melanogaster (Fruit fly).